The sequence spans 329 residues: Elongation factor Ts (329 aa).

The segment at 79–82 (TDFV) is involved in Mg(2+) ion dislocation from EF-Tu.

Belongs to the EF-Ts family.

It localises to the cytoplasm. Associates with the EF-Tu.GDP complex and induces the exchange of GDP to GTP. It remains bound to the aminoacyl-tRNA.EF-Tu.GTP complex up to the GTP hydrolysis stage on the ribosome. The protein is Elongation factor Ts of Parabacteroides distasonis (strain ATCC 8503 / DSM 20701 / CIP 104284 / JCM 5825 / NCTC 11152).